The sequence spans 159 residues: SsrA-binding protein (159 aa).

Over residues 140–150 (RATEKERDWNR) the composition is skewed to basic and acidic residues. The interval 140-159 (RATEKERDWNRQKQRVLRQR) is disordered.

This sequence belongs to the SmpB family.

Its subcellular location is the cytoplasm. In terms of biological role, required for rescue of stalled ribosomes mediated by trans-translation. Binds to transfer-messenger RNA (tmRNA), required for stable association of tmRNA with ribosomes. tmRNA and SmpB together mimic tRNA shape, replacing the anticodon stem-loop with SmpB. tmRNA is encoded by the ssrA gene; the 2 termini fold to resemble tRNA(Ala) and it encodes a 'tag peptide', a short internal open reading frame. During trans-translation Ala-aminoacylated tmRNA acts like a tRNA, entering the A-site of stalled ribosomes, displacing the stalled mRNA. The ribosome then switches to translate the ORF on the tmRNA; the nascent peptide is terminated with the 'tag peptide' encoded by the tmRNA and targeted for degradation. The ribosome is freed to recommence translation, which seems to be the essential function of trans-translation. In Alcanivorax borkumensis (strain ATCC 700651 / DSM 11573 / NCIMB 13689 / SK2), this protein is SsrA-binding protein.